Consider the following 103-residue polypeptide: MKFLIDECLSPELAKMAIEKGHGETSHVVWMKLGGLKDWELKPIILEGDWTFVTKNSVDFRGPKDKPGTKGQYADVAIHAGLICLNGHPAWTSTCRSSCLSRR.

This is an uncharacterized protein from Sinorhizobium fredii (strain NBRC 101917 / NGR234).